Reading from the N-terminus, the 710-residue chain is Lactotransferrin (710 aa).

The first 19 residues, 1-19 (MKLVFLVLLFLGALGLCLA), serve as a signal peptide directing secretion. A Phosphoserine; alternate modification is found at F10. The O-linked (GlcNAc) serine; alternate glycan is linked to F10. Residues 20-24 (GRRRS) form a critical for glycosaminoglycan, lipid A, lysozyme and DNA binding region. Bactericidal and antifungal activity stretches follow at residues 20 to 29 (GRRRSVQWCA) and 39 to 49 (FQWQRNMRKVR). The important for full bactericidal and antifungal activities stretch occupies residues 21-22 (RR). Transferrin-like domains are found at residues 25–352 (VQWC…NLRK) and 364–695 (VVWC…NLKK). 2 disulfides stabilise this stretch: C28–C64 and C38–C55. 2 interaction with PspA regions span residues 39–46 (FQWQRNMR) and 57–58 (KR). The interval 39 to 49 (FQWQRNMRKVR) is interaction with lipopolysaccharide. The involved in glycosaminoglycan binding stretch occupies residues 46–51 (RKVRGP). Residue D79 participates in Fe(3+) binding. The active site involves K92. Y111 is a Fe(3+) binding site. Cystine bridges form between C134/C217, C176/C192, C189/C200, and C250/C264. Positions 136, 140, 142, and 143 each coordinate hydrogencarbonate. An N-linked (GlcNAc...) asparagine glycan is attached at N156. Y211 contacts Fe(3+). A Fe(3+)-binding site is contributed by H272. The active-site Nucleophile is S278. 2 cysteine pairs are disulfide-bonded: C367-C399 and C377-C390. Residues Q379 and S391 each participate in a glycyl lysine isopeptide (Lys-Gly) (interchain with G-Cter in ubiquitin) cross-link. Fe(3+)-binding residues include D414 and Y454. Intrachain disulfides connect C424-C705, C446-C668, C478-C553, C502-C696, C512-C526, C523-C536, C594-C608, and C646-C651. 4 residues coordinate hydrogencarbonate: T480, R484, A486, and G487. N-linked (GlcNAc...) asparagine glycosylation is present at N497. Y547 serves as a coordination point for Fe(3+). H616 is a Fe(3+) binding site. The N-linked (GlcNAc...) asparagine glycan is linked to N642.

It belongs to the transferrin family. As to quaternary structure, monomer. Found in a complex with LTF, CLU, EPPIN and SEMG1. Found in a complex with MPO and LTF; interacts directly with CP, allows Fe(3+) incorporation into LTF and activation of CP ferroxidase activity. In terms of processing, phosphorylation at Ser-10 activates the transcriptional activity. Phosphorylation at Ser-10 also promotes proteasomal degradation. Alternatively can undergo O-GlcNAcylation at Ser-10. O-GlcNAcylation at Ser-10 inhibits DNA binding and negatively regulates the transcriptional activity. Alternatively can undergo phosphorylation at Ser-10. Post-translationally, poly-N-acetyllactosaminic carbohydrate moiety seems to be needed for TLR4 activation. In terms of tissue distribution, high levels are found in saliva and tears, intermediate levels in serum and plasma, and low levels in urine. In kidney, detected in the distal collecting tubules in the medulla but not in the cortical region or in blood vessels. Detected in peripheral blood neutrophils (at protein level). Isoform 1 and isoform DeltaLf are expressed in breast, prostate, spleen, pancreas, kidney, small intestine, lung, skeletal muscle, uterus, thymus and fetal liver. Isoform 1 is expressed in brain, testis and peripheral blood leukocytes; isoform DeltaLf is barely detectable in these tissues. Isoform DeltaLf is expressed in placenta, liver and ovary; isoform 1 is barely detectable in these tissues. In kidney, isoform 1 is expressed at high levels in the collecting tubules of the medulla but at very low levels in the cortex.

It is found in the secreted. It localises to the cytoplasmic granule. The protein localises to the cytoplasm. The protein resides in the nucleus. Functionally, transferrins are iron binding transport proteins which can bind two Fe(3+) ions in association with the binding of an anion, usually bicarbonate. Its function is as follows. Major iron-binding and multifunctional protein found in exocrine fluids such as breast milk and mucosal secretions. Has antimicrobial activity, which depends on the extracellular cation concentration. Antimicrobial properties include bacteriostasis, which is related to its ability to sequester free iron and thus inhibit microbial growth, as well as direct bactericidal properties leading to the release of lipopolysaccharides from the bacterial outer membrane. Can also prevent bacterial biofilm development in P.aeruginosa infection. Has weak antifungal activity against C.albicans. Has anabolic, differentiating and anti-apoptotic effects on osteoblasts and can also inhibit osteoclastogenesis, possibly playing a role in the regulation of bone growth. Promotes binding of species C adenoviruses to epithelial cells, promoting adenovirus infection. Can inhibit papillomavirus infections. Stimulates the TLR4 signaling pathway leading to NF-kappa-B activation and subsequent pro-inflammatory cytokine production while also interfering with the lipopolysaccharide (LPS)-stimulated TLR4 signaling. Inhibits neutrophil granulocyte migration to sites of apoptosis, when secreted by apoptotic cells. Stimulates VEGFA-mediated endothelial cell migration and proliferation. Binds heparin, chondroitin sulfate and possibly other glycosaminoglycans (GAGs). Also binds specifically to pneumococcal surface protein A (PspA), the lipid A portion of bacterial lipopolysaccharide (LPS), lysozyme and DNA. Lactoferricin binds to the bacterial surface and is crucial for the bactericidal functions. Has some antiviral activity against papillomavirus infection. N-terminal region shows strong antifungal activity against C.albicans. Contains two BBXB heparin-binding consensus sequences that appear to form the predominate functional GAG-binding site. In terms of biological role, has antimicrobial activity and is able to permeabilize different ions through liposomal membranes. Functionally, has opioid antagonist activity. Shows preference for mu-receptor. Its function is as follows. Has opioid antagonist activity. Shows higher degrees of preference for kappa-receptors than for mu-receptors. The lactotransferrin transferrin-like domain 1 functions as a serine protease of the peptidase S60 family that cuts arginine rich regions. This function contributes to the antimicrobial activity. Shows a preferential cleavage at -Arg-Ser-Arg-Arg-|- and -Arg-Arg-Ser-Arg-|-, and of Z-Phe-Arg-|-aminomethylcoumarin sites. In terms of biological role, transcription factor with antiproliferative properties and ability to induce cell cycle arrest. Binds to the DeltaLf response element found in the SKP1, BAX, DCPS, and SELENOH promoters. The protein is Lactotransferrin of Homo sapiens (Human).